A 109-amino-acid chain; its full sequence is Large ribosomal subunit protein uL22 (109 aa).

This sequence belongs to the universal ribosomal protein uL22 family. Part of the 50S ribosomal subunit.

This protein binds specifically to 23S rRNA; its binding is stimulated by other ribosomal proteins, e.g. L4, L17, and L20. It is important during the early stages of 50S assembly. It makes multiple contacts with different domains of the 23S rRNA in the assembled 50S subunit and ribosome. In terms of biological role, the globular domain of the protein is located near the polypeptide exit tunnel on the outside of the subunit, while an extended beta-hairpin is found that lines the wall of the exit tunnel in the center of the 70S ribosome. The protein is Large ribosomal subunit protein uL22 of Ralstonia pickettii (strain 12J).